The chain runs to 360 residues: Squamosa promoter-binding-like protein 7 (360 aa).

Gly residues predominate over residues 74–89 (AQGSGGGGGGGGGGSA). The interval 74 to 98 (AQGSGGGGGGGGGGSADQGKRKEKA) is disordered. The segment at 105–182 (VPRCQVEGCD…AGHNERRRRS (78 aa)) adopts an SBP-type zinc-finger fold. Residues C108, C113, C130, H133, C149, C152, H156, and C168 each contribute to the Zn(2+) site. A Bipartite nuclear localization signal motif is present at residues 165-181 (KKSCRRRLAGHNERRRR). Positions 172–182 (LAGHNERRRRS) are enriched in basic residues. Disordered regions lie at residues 172-196 (LAGH…AHPH), 261-306 (FFSD…HENQ), and 318-360 (TTAA…ARVV).

In terms of tissue distribution, expressed in young panicles.

Its subcellular location is the nucleus. Its function is as follows. Trans-acting factor that binds specifically to the consensus nucleotide sequence 5'-TNCGTACAA-3'. May be involved in panicle development. This chain is Squamosa promoter-binding-like protein 7 (SPL7), found in Oryza sativa subsp. japonica (Rice).